Reading from the N-terminus, the 186-residue chain is Nuclear transcription factor Y subunit B-1 (186 aa).

The tract at residues 1–24 (MAGNKKRGGRNMDQVKKAAVRSDG) is disordered. Residues 34–40 (LPMANLV) mediate DNA binding. The subunit association domain (SAD) stretch occupies residues 61–72 (THDCAVEFVGFV). Residues 123-142 (GGNRRVAPPPPAAATPLTPG) are disordered.

It belongs to the NFYB/HAP3 subunit family. In terms of assembly, heterotrimeric transcription factor composed of three components, NF-YA, NF-YB and NF-YC. NF-YB and NF-YC must interact and dimerize for NF-YA association and DNA binding. Interacts with MADS18. Forms a ternary complex with the MADS6-MADS18 heterodimer. As to expression, expressed in developing kernels.

The protein localises to the nucleus. Its function is as follows. Component of the NF-Y/HAP transcription factor complex. The NF-Y complex stimulates the transcription of various genes by recognizing and binding to a CCAAT motif in promoters. May act through association with MADS-box proteins. May regulate the expression of genes involved in flowering. The polypeptide is Nuclear transcription factor Y subunit B-1 (NFYB1) (Oryza sativa subsp. japonica (Rice)).